A 330-amino-acid polypeptide reads, in one-letter code: Putative glycosyltransferase HI_0258 (330 aa).

Residues 1-31 show a composition bias toward basic and acidic residues; the sequence is MTDRQTDRQTDRQTDRQTDRQTDRQTDRQTD. The interval 1 to 32 is disordered; sequence MTDRQTDRQTDRQTDRQTDRQTDRQTDRQTDG. UDP contacts are provided by residues 44-49 and 140-141; these read SSDHYY and DV. 3 residues coordinate Mn(2+): D140, D142, and H270. 270–276 serves as a coordination point for UDP; it reads HYCGPNK.

Belongs to the glycosyltransferase 8 family.

The sequence is that of Putative glycosyltransferase HI_0258 from Haemophilus influenzae (strain ATCC 51907 / DSM 11121 / KW20 / Rd).